The following is a 90-amino-acid chain: LYR motif-containing protein 2 (90 aa).

The transit peptide at 1 to 19 (MASSRLPASALTLKQFIQR) directs the protein to the mitochondrion.

It belongs to the complex I LYR family.

Its subcellular location is the mitochondrion. Its function is as follows. Involved in efficient integration of the N-module into mitochondrial respiratory chain complex I. The chain is LYR motif-containing protein 2 (lyrm2) from Salmo salar (Atlantic salmon).